Reading from the N-terminus, the 75-residue chain is uncharacterized protein (75 aa).

This is an uncharacterized protein from Acidithiobacillus ferridurans.